The following is a 239-amino-acid chain: Large ribosomal subunit protein uL2 (239 aa).

It belongs to the universal ribosomal protein uL2 family.

It localises to the cytoplasm. The sequence is that of Large ribosomal subunit protein uL2 (RPL8) from Encephalitozoon cuniculi (strain GB-M1) (Microsporidian parasite).